The sequence spans 122 residues: Large ribosomal subunit protein bL20 (122 aa).

The protein belongs to the bacterial ribosomal protein bL20 family.

Binds directly to 23S ribosomal RNA and is necessary for the in vitro assembly process of the 50S ribosomal subunit. It is not involved in the protein synthesizing functions of that subunit. This Treponema pallidum (strain Nichols) protein is Large ribosomal subunit protein bL20 (rplT).